The sequence spans 504 residues: Maturase K (504 aa).

Belongs to the intron maturase 2 family. MatK subfamily.

It is found in the plastid. Its subcellular location is the chloroplast. In terms of biological role, usually encoded in the trnK tRNA gene intron. Probably assists in splicing its own and other chloroplast group II introns. In Quercus lyrata (Overcup oak), this protein is Maturase K.